A 277-amino-acid polypeptide reads, in one-letter code: Phosphatidylglycerol--prolipoprotein diacylglyceryl transferase (277 aa).

A run of 4 helical transmembrane segments spans residues 18 to 38, 51 to 71, 89 to 109, and 116 to 136; these read ISVK…LLLA, IIVD…RIYY, IWHG…TAII, and ISFW…QAIG. An a 1,2-diacyl-sn-glycero-3-phospho-(1'-sn-glycerol)-binding site is contributed by Arg137. 3 helical membrane-spanning segments follow: residues 177–197, 205–225, and 235–255; these read QPTF…LLII, GELF…IEGM, and FRVS…IIIY.

The protein belongs to the Lgt family.

It is found in the cell membrane. It catalyses the reaction L-cysteinyl-[prolipoprotein] + a 1,2-diacyl-sn-glycero-3-phospho-(1'-sn-glycerol) = an S-1,2-diacyl-sn-glyceryl-L-cysteinyl-[prolipoprotein] + sn-glycerol 1-phosphate + H(+). It participates in protein modification; lipoprotein biosynthesis (diacylglyceryl transfer). Catalyzes the transfer of the diacylglyceryl group from phosphatidylglycerol to the sulfhydryl group of the N-terminal cysteine of a prolipoprotein, the first step in the formation of mature lipoproteins. The chain is Phosphatidylglycerol--prolipoprotein diacylglyceryl transferase from Listeria monocytogenes serovar 1/2a (strain ATCC BAA-679 / EGD-e).